We begin with the raw amino-acid sequence, 238 residues long: Transcription termination/antitermination protein NusG (238 aa).

This sequence belongs to the NusG family.

In terms of biological role, participates in transcription elongation, termination and antitermination. In Mycobacterium tuberculosis (strain CDC 1551 / Oshkosh), this protein is Transcription termination/antitermination protein NusG.